The chain runs to 168 residues: Photosystem I assembly protein Ycf3 (168 aa).

TPR repeat units follow at residues Ala-35 to Pro-68, Ser-72 to Leu-105, and Gly-120 to Asn-153.

This sequence belongs to the Ycf3 family.

Its subcellular location is the plastid. The protein localises to the chloroplast thylakoid membrane. Functionally, essential for the assembly of the photosystem I (PSI) complex. May act as a chaperone-like factor to guide the assembly of the PSI subunits. This is Photosystem I assembly protein Ycf3 from Coffea arabica (Arabian coffee).